Reading from the N-terminus, the 339-residue chain is UDP-N-acetylenolpyruvoylglucosamine reductase (339 aa).

The 172-residue stretch at Gly18–Arg189 folds into the FAD-binding PCMH-type domain. Arg166 is an active-site residue. Ser239 serves as the catalytic Proton donor. Glu335 is an active-site residue.

It belongs to the MurB family. FAD is required as a cofactor.

The protein resides in the cytoplasm. It catalyses the reaction UDP-N-acetyl-alpha-D-muramate + NADP(+) = UDP-N-acetyl-3-O-(1-carboxyvinyl)-alpha-D-glucosamine + NADPH + H(+). It functions in the pathway cell wall biogenesis; peptidoglycan biosynthesis. Functionally, cell wall formation. The chain is UDP-N-acetylenolpyruvoylglucosamine reductase from Pseudomonas aeruginosa (strain ATCC 15692 / DSM 22644 / CIP 104116 / JCM 14847 / LMG 12228 / 1C / PRS 101 / PAO1).